A 130-amino-acid chain; its full sequence is Glycoprotein hormone alpha-2 (130 aa).

The signal sequence occupies residues 1-22 (MPMAPRVLLFCLLGLAVTEGHG). 4 disulfides stabilise this stretch: Cys-32–Cys-90, Cys-49–Cys-104, Cys-58–Cys-120, and Cys-62–Cys-122. Residues Asn-38 and Asn-82 are each glycosylated (N-linked (GlcNAc...) asparagine).

The protein belongs to the glycoprotein hormones subunit alpha family. In terms of assembly, heterodimer with GPHB5; this heterodimer interacts with thyroid-stimulating hormone receptor (TSHR), and hence stimulates cAMP production.

Its subcellular location is the secreted. In terms of biological role, functions as a heterodimeric glycoprotein hormone with GPHB5 able to bind and activate the thyroid-stimulating hormone receptor (TSHR), leading to increased cAMP production. Plays a central role in controlling thyroid cell metabolism. The polypeptide is Glycoprotein hormone alpha-2 (Gpha2) (Rattus norvegicus (Rat)).